The following is a 420-amino-acid chain: Diaminopimelate decarboxylase (420 aa).

N6-(pyridoxal phosphate)lysine is present on lysine 54. Histidine 191 contacts substrate. Pyridoxal 5'-phosphate is bound by residues glycine 227 and 268–271 (EPGR). Substrate contacts are provided by arginine 271, arginine 307, and tyrosine 311. Catalysis depends on cysteine 342, which acts as the Proton donor. 2 residues coordinate substrate: glutamate 343 and tyrosine 378. A pyridoxal 5'-phosphate-binding site is contributed by tyrosine 378.

Belongs to the Orn/Lys/Arg decarboxylase class-II family. LysA subfamily. The cofactor is pyridoxal 5'-phosphate.

It carries out the reaction meso-2,6-diaminopimelate + H(+) = L-lysine + CO2. It functions in the pathway amino-acid biosynthesis; L-lysine biosynthesis via DAP pathway; L-lysine from DL-2,6-diaminopimelate: step 1/1. Is activated by 2,3-dimercaptopropan-1-ol. Functionally, specifically catalyzes the decarboxylation of meso-diaminopimelate (meso-DAP) to L-lysine. Is not active against the DD- or LL-isomers of diaminopimelate. This Escherichia coli (strain K12) protein is Diaminopimelate decarboxylase.